We begin with the raw amino-acid sequence, 575 residues long: Arginine--tRNA ligase (575 aa).

A 'HIGH' region motif is present at residues 131–141; it reads ANPNGPLHIGH.

This sequence belongs to the class-I aminoacyl-tRNA synthetase family.

The protein localises to the cytoplasm. The catalysed reaction is tRNA(Arg) + L-arginine + ATP = L-arginyl-tRNA(Arg) + AMP + diphosphate. This is Arginine--tRNA ligase from Methanobrevibacter smithii (strain ATCC 35061 / DSM 861 / OCM 144 / PS).